The following is a 140-amino-acid chain: Nucleoside diphosphate kinase (140 aa).

Lys11, Phe59, Arg87, Thr93, Arg104, and Asn114 together coordinate ATP. His117 acts as the Pros-phosphohistidine intermediate in catalysis.

The protein belongs to the NDK family. Homotetramer. The cofactor is Mg(2+).

Its subcellular location is the cytoplasm. It catalyses the reaction a 2'-deoxyribonucleoside 5'-diphosphate + ATP = a 2'-deoxyribonucleoside 5'-triphosphate + ADP. It carries out the reaction a ribonucleoside 5'-diphosphate + ATP = a ribonucleoside 5'-triphosphate + ADP. Functionally, major role in the synthesis of nucleoside triphosphates other than ATP. The ATP gamma phosphate is transferred to the NDP beta phosphate via a ping-pong mechanism, using a phosphorylated active-site intermediate. This Bartonella henselae (strain ATCC 49882 / DSM 28221 / CCUG 30454 / Houston 1) (Rochalimaea henselae) protein is Nucleoside diphosphate kinase.